A 297-amino-acid polypeptide reads, in one-letter code: Tryptophan 2,3-dioxygenase (297 aa).

Substrate-binding positions include 51 to 55 (FIIQH), Y113, and R117. Position 240 (H240) interacts with heme. T254 serves as a coordination point for substrate.

This sequence belongs to the tryptophan 2,3-dioxygenase family. Homotetramer. Requires heme as cofactor.

The catalysed reaction is L-tryptophan + O2 = N-formyl-L-kynurenine. Its pathway is amino-acid degradation; L-tryptophan degradation via kynurenine pathway; L-kynurenine from L-tryptophan: step 1/2. In terms of biological role, heme-dependent dioxygenase that catalyzes the oxidative cleavage of the L-tryptophan (L-Trp) pyrrole ring and converts L-tryptophan to N-formyl-L-kynurenine. Catalyzes the oxidative cleavage of the indole moiety. The chain is Tryptophan 2,3-dioxygenase from Xanthomonas oryzae pv. oryzae (strain MAFF 311018).